Consider the following 105-residue polypeptide: Large ribosomal subunit protein bL21c (105 aa).

The protein belongs to the bacterial ribosomal protein bL21 family. In terms of assembly, part of the 50S ribosomal subunit.

It is found in the plastid. Its subcellular location is the chloroplast. Its function is as follows. This protein binds to 23S rRNA. The sequence is that of Large ribosomal subunit protein bL21c from Trieres chinensis (Marine centric diatom).